Here is a 267-residue protein sequence, read N- to C-terminus: Tryptophan synthase alpha chain (267 aa).

Catalysis depends on proton acceptor residues Glu-49 and Asp-60.

Belongs to the TrpA family. In terms of assembly, tetramer of two alpha and two beta chains.

It carries out the reaction (1S,2R)-1-C-(indol-3-yl)glycerol 3-phosphate + L-serine = D-glyceraldehyde 3-phosphate + L-tryptophan + H2O. It functions in the pathway amino-acid biosynthesis; L-tryptophan biosynthesis; L-tryptophan from chorismate: step 5/5. The alpha subunit is responsible for the aldol cleavage of indoleglycerol phosphate to indole and glyceraldehyde 3-phosphate. The protein is Tryptophan synthase alpha chain of Methylococcus capsulatus (strain ATCC 33009 / NCIMB 11132 / Bath).